Here is a 459-residue protein sequence, read N- to C-terminus: O-phospho-L-seryl-tRNA:Cys-tRNA synthase 1 (459 aa).

Pyridoxal 5'-phosphate contacts are provided by residues 152-153 (AR), N257, and 280-282 (SGH). At K283 the chain carries N6-(pyridoxal phosphate)lysine.

The protein belongs to the SepCysS family. Homodimer. Interacts with SepRS. It depends on pyridoxal 5'-phosphate as a cofactor.

The catalysed reaction is O-phospho-L-seryl-tRNA(Cys) + hydrogen sulfide + H(+) = L-cysteinyl-tRNA(Cys) + phosphate. Converts O-phospho-L-seryl-tRNA(Cys) (Sep-tRNA(Cys)) to L-cysteinyl-tRNA(Cys) (Cys-tRNA(Cys)). This Methanococcoides burtonii (strain DSM 6242 / NBRC 107633 / OCM 468 / ACE-M) protein is O-phospho-L-seryl-tRNA:Cys-tRNA synthase 1.